Consider the following 278-residue polypeptide: Tryptophan synthase alpha chain (278 aa).

Active-site proton acceptor residues include Glu61 and Asp72.

The protein belongs to the TrpA family. Tetramer of two alpha and two beta chains.

It carries out the reaction (1S,2R)-1-C-(indol-3-yl)glycerol 3-phosphate + L-serine = D-glyceraldehyde 3-phosphate + L-tryptophan + H2O. It participates in amino-acid biosynthesis; L-tryptophan biosynthesis; L-tryptophan from chorismate: step 5/5. Its function is as follows. The alpha subunit is responsible for the aldol cleavage of indoleglycerol phosphate to indole and glyceraldehyde 3-phosphate. This is Tryptophan synthase alpha chain from Shewanella oneidensis (strain ATCC 700550 / JCM 31522 / CIP 106686 / LMG 19005 / NCIMB 14063 / MR-1).